Here is a 329-residue protein sequence, read N- to C-terminus: Malate dehydrogenase (329 aa).

12-18 (GAAGQIG) lines the NAD(+) pocket. Substrate contacts are provided by Arg93 and Arg99. Residues Asn106, Gln113, and 130–132 (TGN) each bind NAD(+). Substrate contacts are provided by Asn132 and Arg163. His188 functions as the Proton acceptor in the catalytic mechanism.

The protein belongs to the LDH/MDH superfamily. MDH type 2 family.

The enzyme catalyses (S)-malate + NAD(+) = oxaloacetate + NADH + H(+). In terms of biological role, catalyzes the reversible oxidation of malate to oxaloacetate. This Mycobacterium ulcerans (strain Agy99) protein is Malate dehydrogenase.